Consider the following 32-residue polypeptide: Secreted protein F2 (32 aa).

It is found in the secreted. This Globisporangium hypogynum (Pythium hypogynum) protein is Secreted protein F2.